Consider the following 1299-residue polypeptide: DNA-directed RNA polymerase subunit beta' (1299 aa).

Positions 60, 62, 75, and 78 each coordinate Zn(2+). The tract at residues 385 to 405 is disordered; that stretch reads GRRGRPVTGPGNRPLKSLSDM. Mg(2+) is bound by residues D535, D537, and D539. Zn(2+)-binding residues include C886, C962, C969, and C972.

The protein belongs to the RNA polymerase beta' chain family. In terms of assembly, the RNAP catalytic core consists of 2 alpha, 1 beta, 1 beta' and 1 omega subunit. When a sigma factor is associated with the core the holoenzyme is formed, which can initiate transcription. It depends on Mg(2+) as a cofactor. Requires Zn(2+) as cofactor.

The enzyme catalyses RNA(n) + a ribonucleoside 5'-triphosphate = RNA(n+1) + diphosphate. In terms of biological role, DNA-dependent RNA polymerase catalyzes the transcription of DNA into RNA using the four ribonucleoside triphosphates as substrates. The chain is DNA-directed RNA polymerase subunit beta' from Streptomyces coelicolor (strain ATCC BAA-471 / A3(2) / M145).